The chain runs to 119 residues: Small ribosomal subunit protein uS13 (119 aa).

The segment at 92–119 (RRGLPVRGQRTKTNARTRKGPRKAIRAR) is disordered.

It belongs to the universal ribosomal protein uS13 family. Part of the 30S ribosomal subunit. Forms a loose heterodimer with protein S19. Forms two bridges to the 50S subunit in the 70S ribosome.

Its function is as follows. Located at the top of the head of the 30S subunit, it contacts several helices of the 16S rRNA. In the 70S ribosome it contacts the 23S rRNA (bridge B1a) and protein L5 of the 50S subunit (bridge B1b), connecting the 2 subunits; these bridges are implicated in subunit movement. Contacts the tRNAs in the A and P-sites. The chain is Small ribosomal subunit protein uS13 from Nitrosomonas eutropha (strain DSM 101675 / C91 / Nm57).